The primary structure comprises 425 residues: Serine--tRNA ligase (425 aa).

231 to 233 (TAE) serves as a coordination point for L-serine. 262-264 (RSE) serves as a coordination point for ATP. Residue E285 participates in L-serine binding. 349–352 (EISS) lines the ATP pocket. Residue S385 participates in L-serine binding.

The protein belongs to the class-II aminoacyl-tRNA synthetase family. Type-1 seryl-tRNA synthetase subfamily. In terms of assembly, homodimer. The tRNA molecule binds across the dimer.

It localises to the cytoplasm. The catalysed reaction is tRNA(Ser) + L-serine + ATP = L-seryl-tRNA(Ser) + AMP + diphosphate + H(+). It carries out the reaction tRNA(Sec) + L-serine + ATP = L-seryl-tRNA(Sec) + AMP + diphosphate + H(+). It functions in the pathway aminoacyl-tRNA biosynthesis; selenocysteinyl-tRNA(Sec) biosynthesis; L-seryl-tRNA(Sec) from L-serine and tRNA(Sec): step 1/1. Functionally, catalyzes the attachment of serine to tRNA(Ser). Is also able to aminoacylate tRNA(Sec) with serine, to form the misacylated tRNA L-seryl-tRNA(Sec), which will be further converted into selenocysteinyl-tRNA(Sec). This chain is Serine--tRNA ligase, found in Bartonella henselae (strain ATCC 49882 / DSM 28221 / CCUG 30454 / Houston 1) (Rochalimaea henselae).